The chain runs to 469 residues: Soluble pyridine nucleotide transhydrogenase (469 aa).

Position 39-48 (39-48 (ERENSVGGGC)) interacts with FAD.

Belongs to the class-I pyridine nucleotide-disulfide oxidoreductase family. It depends on FAD as a cofactor.

The protein resides in the cytoplasm. It carries out the reaction NAD(+) + NADPH = NADH + NADP(+). In terms of biological role, conversion of NADPH, generated by peripheral catabolic pathways, to NADH, which can enter the respiratory chain for energy generation. The protein is Soluble pyridine nucleotide transhydrogenase of Photobacterium profundum (strain SS9).